The chain runs to 266 residues: 4-hydroxy-tetrahydrodipicolinate reductase (266 aa).

Residues Gly8–Met13 and Glu33 contribute to the NAD(+) site. Arg34 is an NADP(+) binding site. Residues Gly97–Thr99 and Ala121–Met124 each bind NAD(+). His154 serves as the catalytic Proton donor/acceptor. His155 provides a ligand contact to (S)-2,3,4,5-tetrahydrodipicolinate. Catalysis depends on Lys158, which acts as the Proton donor. Residue Gly164–Thr165 coordinates (S)-2,3,4,5-tetrahydrodipicolinate.

This sequence belongs to the DapB family.

Its subcellular location is the cytoplasm. The catalysed reaction is (S)-2,3,4,5-tetrahydrodipicolinate + NAD(+) + H2O = (2S,4S)-4-hydroxy-2,3,4,5-tetrahydrodipicolinate + NADH + H(+). It carries out the reaction (S)-2,3,4,5-tetrahydrodipicolinate + NADP(+) + H2O = (2S,4S)-4-hydroxy-2,3,4,5-tetrahydrodipicolinate + NADPH + H(+). Its pathway is amino-acid biosynthesis; L-lysine biosynthesis via DAP pathway; (S)-tetrahydrodipicolinate from L-aspartate: step 4/4. In terms of biological role, catalyzes the conversion of 4-hydroxy-tetrahydrodipicolinate (HTPA) to tetrahydrodipicolinate. This Geobacter metallireducens (strain ATCC 53774 / DSM 7210 / GS-15) protein is 4-hydroxy-tetrahydrodipicolinate reductase.